Reading from the N-terminus, the 276-residue chain is NADPH-dependent 7-cyano-7-deazaguanine reductase (276 aa).

Substrate is bound at residue 80 to 82 (VES). 82 to 83 (SK) contacts NADPH. Cys-183 serves as the catalytic Thioimide intermediate. Asp-190 (proton donor) is an active-site residue. 222–223 (HE) provides a ligand contact to substrate. 251–252 (RG) contacts NADPH.

This sequence belongs to the GTP cyclohydrolase I family. QueF type 2 subfamily. In terms of assembly, homodimer.

The protein localises to the cytoplasm. It catalyses the reaction 7-aminomethyl-7-carbaguanine + 2 NADP(+) = 7-cyano-7-deazaguanine + 2 NADPH + 3 H(+). The protein operates within tRNA modification; tRNA-queuosine biosynthesis. Its function is as follows. Catalyzes the NADPH-dependent reduction of 7-cyano-7-deazaguanine (preQ0) to 7-aminomethyl-7-deazaguanine (preQ1). This chain is NADPH-dependent 7-cyano-7-deazaguanine reductase, found in Burkholderia orbicola (strain MC0-3).